The following is a 305-amino-acid chain: Oxygen-dependent coproporphyrinogen-III oxidase (305 aa).

Position 92 (Ser-92) interacts with substrate. The a divalent metal cation site is built by His-96 and His-106. The Proton donor role is filled by His-106. Substrate is bound at residue 108–110 (NVR). A divalent metal cation is bound by residues His-145 and His-175. Residues 239–274 (YVEFNLLFDRGTLFGLQSGGRAESILISLPPLVRWE) form an important for dimerization region. 257-259 (GGR) serves as a coordination point for substrate.

It belongs to the aerobic coproporphyrinogen-III oxidase family. Homodimer. A divalent metal cation serves as cofactor.

It is found in the cytoplasm. It catalyses the reaction coproporphyrinogen III + O2 + 2 H(+) = protoporphyrinogen IX + 2 CO2 + 2 H2O. Its pathway is porphyrin-containing compound metabolism; protoporphyrin-IX biosynthesis; protoporphyrinogen-IX from coproporphyrinogen-III (O2 route): step 1/1. Functionally, involved in the heme biosynthesis. Catalyzes the aerobic oxidative decarboxylation of propionate groups of rings A and B of coproporphyrinogen-III to yield the vinyl groups in protoporphyrinogen-IX. This is Oxygen-dependent coproporphyrinogen-III oxidase from Xylella fastidiosa (strain Temecula1 / ATCC 700964).